Here is a 389-residue protein sequence, read N- to C-terminus: Aminomethyltransferase (389 aa).

The protein belongs to the GcvT family. As to quaternary structure, the glycine cleavage system is composed of four proteins: P, T, L and H.

It carries out the reaction N(6)-[(R)-S(8)-aminomethyldihydrolipoyl]-L-lysyl-[protein] + (6S)-5,6,7,8-tetrahydrofolate = N(6)-[(R)-dihydrolipoyl]-L-lysyl-[protein] + (6R)-5,10-methylene-5,6,7,8-tetrahydrofolate + NH4(+). The glycine cleavage system catalyzes the degradation of glycine. This Corynebacterium jeikeium (strain K411) protein is Aminomethyltransferase.